Reading from the N-terminus, the 51-residue chain is Large ribosomal subunit protein bL33 (51 aa).

Belongs to the bacterial ribosomal protein bL33 family. Part of the 50S ribosomal subunit. Cross-links to the P and E site tRNAs.

This Pseudomonas aeruginosa (strain ATCC 15692 / DSM 22644 / CIP 104116 / JCM 14847 / LMG 12228 / 1C / PRS 101 / PAO1) protein is Large ribosomal subunit protein bL33.